A 479-amino-acid chain; its full sequence is MAKTRGSCCLVNALIAIAFLATAHLCEAGLSQKEQDKVSKLPGQNFNVSFAHYSGFVATNEQLGRALFYWLFEAVEDAKSKPLVLWLNGGPGCSSVAYGEAEEIGPFHIKADGKTLYLNQYSWNQAANILFLDAPVGVGYSYSNTSSDLKSNGDKRTAEDSLKFLLKWVERFPEYKGRDFYIVGESYAGHYIPQLSEAIVKHNQGSDKNSINLKGYMVGNGLMDDFHDRLGLFQYIWSLGFISDQTYSLLQLQCGFESFIHSSKQCNKILEIADKEIGNIDQYSVFTPACVANASQSNMLLKKRPMTSRVSEQYDPCTEKHTTVYFNLPEVQKALHVPPGLAPSKWDTCSDVVSEHWNDSPSSVLNIYHELIAAGLRIWVFSGDADAVVPVTSTRYSIDALNLRPLSAYGPWYLDGQVGGWSQQYAGLNFVTVRGAGHEVPLHRPKQALALFKAFISGTPLSTHENSISRDMSELVSDS.

An N-terminal signal peptide occupies residues 1–28 (MAKTRGSCCLVNALIAIAFLATAHLCEA). Residues asparagine 47 and asparagine 144 are each glycosylated (N-linked (GlcNAc...) asparagine). Cystine bridges form between cysteine 93–cysteine 349, cysteine 254–cysteine 266, and cysteine 290–cysteine 317. The active site involves serine 186. An N-linked (GlcNAc...) asparagine glycan is attached at asparagine 293. Catalysis depends on residues aspartate 386 and histidine 438.

The protein belongs to the peptidase S10 family. As to expression, expressed in seedlings, roots, leaves and flowers.

It localises to the secreted. Its function is as follows. Probable carboxypeptidase. This Arabidopsis thaliana (Mouse-ear cress) protein is Serine carboxypeptidase-like 29 (SCPL29).